Reading from the N-terminus, the 180-residue chain is Large ribosomal subunit protein uL6 (180 aa).

The protein belongs to the universal ribosomal protein uL6 family. As to quaternary structure, part of the 50S ribosomal subunit.

Its function is as follows. This protein binds to the 23S rRNA, and is important in its secondary structure. It is located near the subunit interface in the base of the L7/L12 stalk, and near the tRNA binding site of the peptidyltransferase center. The sequence is that of Large ribosomal subunit protein uL6 from Mycoplasma capricolum subsp. capricolum (strain California kid / ATCC 27343 / NCTC 10154).